Here is a 37-residue protein sequence, read N- to C-terminus: WNPFKELERAGQRVRDAIISAGPAVATVGQAAAIARG.

Residue glycine 37 is modified to Glycine amide.

The protein belongs to the cecropin family.

It is found in the secreted. In terms of biological role, cecropins have lytic and antibacterial activity against several Gram-positive and Gram-negative bacteria. This is Bactericidin B-3 from Manduca sexta (Tobacco hawkmoth).